A 541-amino-acid polypeptide reads, in one-letter code: Ascorbate transporter, chloroplastic (541 aa).

Residues 1–28 (MALGGLISNRNFGSFIGSGNGCQRLGKS) constitute a chloroplast transit peptide. The next 11 membrane-spanning stretches (helical) occupy residues 133-155 (VIVL…MSIA), 170-190 (VGLI…LGGI), 199-219 (VVLG…PIAA), 221-241 (LGLP…GVAM), 263-283 (LVYS…PMLI), 286-306 (FGWP…FLLW), 352-372 (VWAL…LLTW), 390-410 (LLCV…GWIA), 430-450 (IGFL…TPAM), 481-501 (AGVL…FGTA), and 515-535 (VFKV…LFAT).

It belongs to the major facilitator superfamily. Sodium/anion cotransporter (TC 2.A.1.14) family. In terms of tissue distribution, expressed in stems, developing siliques, leaf mesophyll cells and sepals of mature flowers. Not detected in roots. Detected in palisade tissue rather than spongy tissue from the leaves.

It is found in the plastid. The protein localises to the chloroplast inner membrane. With respect to regulation, insensitive to dehydroascorbate, p-isoascorbate, inorganic phosphate, glutamate, ATP, p-aminohippuric acid or tetraethylammonium. Its function is as follows. Inorganic phosphate and probable anion transporter. Ascorbate transporter bridging the chloroplast envelope. Transports ascorbate from the cytosol into the chloroplast. Requires chloride ions and the presence of an electrochemical potential across the membrane for activity. The chain is Ascorbate transporter, chloroplastic (PHT4;4) from Arabidopsis thaliana (Mouse-ear cress).